A 104-amino-acid chain; its full sequence is ATP-dependent Clp protease adapter protein ClpS (104 aa).

It belongs to the ClpS family. In terms of assembly, binds to the N-terminal domain of the chaperone ClpA.

Its function is as follows. Involved in the modulation of the specificity of the ClpAP-mediated ATP-dependent protein degradation. This Burkholderia ambifaria (strain MC40-6) protein is ATP-dependent Clp protease adapter protein ClpS.